A 671-amino-acid chain; its full sequence is tRNA 5-methylaminomethyl-2-thiouridine biosynthesis bifunctional protein MnmC (671 aa).

The interval 1 to 245 (MVNVMNTLSF…KREMLWGEKP (245 aa)) is tRNA (mnm(5)s(2)U34)-methyltransferase. The segment at 272–671 (VGGGVASLFV…RKLLKGSKVE (400 aa)) is FAD-dependent cmnm(5)s(2)U34 oxidoreductase.

It in the N-terminal section; belongs to the methyltransferase superfamily. tRNA (mnm(5)s(2)U34)-methyltransferase family. This sequence in the C-terminal section; belongs to the DAO family. FAD serves as cofactor.

The protein localises to the cytoplasm. The catalysed reaction is 5-aminomethyl-2-thiouridine(34) in tRNA + S-adenosyl-L-methionine = 5-methylaminomethyl-2-thiouridine(34) in tRNA + S-adenosyl-L-homocysteine + H(+). In terms of biological role, catalyzes the last two steps in the biosynthesis of 5-methylaminomethyl-2-thiouridine (mnm(5)s(2)U) at the wobble position (U34) in tRNA. Catalyzes the FAD-dependent demodification of cmnm(5)s(2)U34 to nm(5)s(2)U34, followed by the transfer of a methyl group from S-adenosyl-L-methionine to nm(5)s(2)U34, to form mnm(5)s(2)U34. This chain is tRNA 5-methylaminomethyl-2-thiouridine biosynthesis bifunctional protein MnmC, found in Actinobacillus pleuropneumoniae serotype 3 (strain JL03).